The chain runs to 400 residues: MPSVEESLALIKRGAEEIIQEEGLIEKLKRGEPLRIKAGFDPTAPDLHLGHTVLINKLRQFQDLGHQVIFLIGDFTGMIGDPTGKSATRPPLTKEDVAQNAQTYKEQVFKILDPKKTEVRFNSEWMDKLSAADMIRLAGQYTVARMLERDDFHKRYHGEQSISIHEFLYPLVQGYDSVALRADVELGGTDQKFNLLMGRMLQKHYDQEPQVIMTMPILEGLDGVQKMSKSLGNYIGVNDLPGEMFGKLLSIPDELMWRYFELLSFRDMAEIEDFKVQVNAGENPQNIKRLLAEEIVARFHGGEAAQSAHKSAGNQVKLGEIPENVPVVHLEESDDQTEFSISYILRRADLVKNGAAAKDVLGRGAVFVDGAQVDPSFMVQRGSEHVIQAGKKKIAQIFVK.

Residues 42 to 51 (PTAPDLHLGH) carry the 'HIGH' region motif. Positions 226–230 (KMSKS) match the 'KMSKS' region motif. K229 is an ATP binding site. The S4 RNA-binding domain maps to 339–399 (FSISYILRRA…GKKKIAQIFV (61 aa)).

This sequence belongs to the class-I aminoacyl-tRNA synthetase family. TyrS type 2 subfamily. As to quaternary structure, homodimer.

It localises to the cytoplasm. It carries out the reaction tRNA(Tyr) + L-tyrosine + ATP = L-tyrosyl-tRNA(Tyr) + AMP + diphosphate + H(+). In terms of biological role, catalyzes the attachment of tyrosine to tRNA(Tyr) in a two-step reaction: tyrosine is first activated by ATP to form Tyr-AMP and then transferred to the acceptor end of tRNA(Tyr). This chain is Tyrosine--tRNA ligase, found in Hahella chejuensis (strain KCTC 2396).